Reading from the N-terminus, the 322-residue chain is Ferrochelatase (322 aa).

His-194 and Glu-275 together coordinate Fe cation.

It belongs to the ferrochelatase family.

It is found in the cytoplasm. It catalyses the reaction heme b + 2 H(+) = protoporphyrin IX + Fe(2+). It participates in porphyrin-containing compound metabolism; protoheme biosynthesis; protoheme from protoporphyrin-IX: step 1/1. Functionally, catalyzes the ferrous insertion into protoporphyrin IX. This is Ferrochelatase from Proteus mirabilis (strain HI4320).